We begin with the raw amino-acid sequence, 557 residues long: Prosaposin (557 aa).

A signal peptide spans 1 to 16; it reads MYALALFASLLATALT. Residues 17 to 59 constitute a propeptide that is removed on maturation; sequence SPVQDPKTCSGGSAVLCRDVKTAVDCGAVKHCQQMVWSKPTAK. The region spanning 18–58 is the Saposin A-type 1 domain; it reads PVQDPKTCSGGSAVLCRDVKTAVDCGAVKHCQQMVWSKPTA. 4 consecutive Saposin B-type domains span residues 59–142, 193–277, 313–394, and 438–519; these read KSLP…QSLQ, NEDV…NEVK, NVIL…AARP, and NGGF…PSAY. 3 disulfides stabilise this stretch: Cys-63–Cys-138, Cys-66–Cys-132, and Cys-94–Cys-106. An N-linked (GlcNAc...) asparagine glycan is attached at Asn-80. A propeptide spanning residues 143–193 is cleaved from the precursor; it reads EYLAEQNQKQLESNKIPEVDMARVVAPFMSNIPLLLYPQDHPRSQPQPKAN. Disulfide bonds link Cys-197-Cys-273, Cys-200-Cys-267, and Cys-229-Cys-240. A glycan (N-linked (GlcNAc...) asparagine) is linked at Asn-214. Positions 277 to 312 are excised as a propeptide; the sequence is KRVPMKTLVPATETIKNILPALEMMDPYEQNLVQAH. 3 disulfide bridges follow: Cys-317-Cys-390, Cys-320-Cys-384, and Cys-348-Cys-359. N-linked (GlcNAc...) asparagine glycosylation is present at Asn-334. Positions 393–437 are excised as a propeptide; sequence RPELVEALEQPAPAIVSALLKEPTPPKQPAQPKQSALPAHVPPQK. 3 cysteine pairs are disulfide-bonded: Cys-442–Cys-515, Cys-445–Cys-509, and Cys-473–Cys-484. A glycan (N-linked (GlcNAc...) asparagine) is linked at Asn-459. Residues 520-557 constitute a propeptide that is removed on maturation; that stretch reads KLLLGTEKCVWGPSYWCQNMETAARCNAVDHCKRHVWN. A Saposin A-type 2 domain is found at 521-557; the sequence is LLLGTEKCVWGPSYWCQNMETAARCNAVDHCKRHVWN.

In terms of assembly, saposin-B is a homodimer. Prosaposin exists as a roughly half-half mixture of monomers and disulfide-linked dimers. Monomeric prosaposin interacts (via C-terminus) with sortilin/SORT1, the interaction is required for targeting to lysosomes. Interacts with GRN; facilitates lysosomal delivery of progranulin from the extracellular space and the biosynthetic pathway.

The protein resides in the secreted. It localises to the lysosome. Behaves as a myelinotrophic and neurotrophic factor, these effects are mediated by its G-protein-coupled receptors, GPR37 and GPR37L1, undergoing ligand-mediated internalization followed by ERK phosphorylation signaling. Its function is as follows. Saposin-A and saposin-C stimulate the hydrolysis of glucosylceramide by beta-glucosylceramidase (EC 3.2.1.45) and galactosylceramide by beta-galactosylceramidase (EC 3.2.1.46). Saposin-C apparently acts by combining with the enzyme and acidic lipid to form an activated complex, rather than by solubilizing the substrate. Functionally, saposin-B stimulates the hydrolysis of galacto-cerebroside sulfate by arylsulfatase A (EC 3.1.6.8), GM1 gangliosides by beta-galactosidase (EC 3.2.1.23) and globotriaosylceramide by alpha-galactosidase A (EC 3.2.1.22). Saposin-B forms a solubilizing complex with the substrates of the sphingolipid hydrolases. In terms of biological role, saposin-D is a specific sphingomyelin phosphodiesterase activator (EC 3.1.4.12). Saposins are specific low-molecular mass non-enzymatic proteins, they participate in the lysosomal degradation of sphingolipids, which takes place by the sequential action of specific hydrolases. The protein is Prosaposin (Psap) of Mus musculus (Mouse).